The following is a 425-amino-acid chain: Serine--tRNA ligase (425 aa).

L-serine is bound at residue 230 to 232 (TAE). 261 to 263 (RSE) serves as a coordination point for ATP. Residue E284 coordinates L-serine. 348-351 (EISS) contacts ATP. Residue S384 participates in L-serine binding.

It belongs to the class-II aminoacyl-tRNA synthetase family. Type-1 seryl-tRNA synthetase subfamily. Homodimer. The tRNA molecule binds across the dimer.

It localises to the cytoplasm. It carries out the reaction tRNA(Ser) + L-serine + ATP = L-seryl-tRNA(Ser) + AMP + diphosphate + H(+). It catalyses the reaction tRNA(Sec) + L-serine + ATP = L-seryl-tRNA(Sec) + AMP + diphosphate + H(+). The protein operates within aminoacyl-tRNA biosynthesis; selenocysteinyl-tRNA(Sec) biosynthesis; L-seryl-tRNA(Sec) from L-serine and tRNA(Sec): step 1/1. Its function is as follows. Catalyzes the attachment of serine to tRNA(Ser). Is also able to aminoacylate tRNA(Sec) with serine, to form the misacylated tRNA L-seryl-tRNA(Sec), which will be further converted into selenocysteinyl-tRNA(Sec). This Streptococcus pyogenes serotype M3 (strain SSI-1) protein is Serine--tRNA ligase.